The sequence spans 189 residues: Putative dihydrofolate reductase (189 aa).

Residues 3–185 (KMNLIVAMDA…LKFEFCKWKV (183 aa)) enclose the DHFR domain. NADP(+) is bound by residues Ala9 and 15-21 (GIGKNGV). Residue 29-34 (DMQYFA) coordinates substrate. 53–55 (RKC) lines the NADP(+) pocket. Arg69 serves as a coordination point for substrate. Residues 75–77 (SRQ) and 115–122 (GGAEIYDL) contribute to the NADP(+) site.

Belongs to the dihydrofolate reductase family.

The enzyme catalyses (6S)-5,6,7,8-tetrahydrofolate + NADP(+) = 7,8-dihydrofolate + NADPH + H(+). It participates in cofactor biosynthesis; tetrahydrofolate biosynthesis; 5,6,7,8-tetrahydrofolate from 7,8-dihydrofolate: step 1/1. Key enzyme in folate metabolism. Catalyzes an essential reaction for de novo glycine and purine synthesis, and for DNA precursor synthesis. In Caenorhabditis elegans, this protein is Putative dihydrofolate reductase (dhfr-1).